The following is a 545-amino-acid chain: Carboxylesterase 5A (545 aa).

The first 28 residues, 1–28, serve as a signal peptide directing secretion; the sequence is MSGMWVHPGRTLIWALWVLAAVIKGPAA. The N-linked (GlcNAc...) (complex) asparagine glycan is linked to asparagine 86. Cysteine 94 and cysteine 121 form a disulfide bridge. An N-linked (GlcNAc...) asparagine glycan is attached at asparagine 134. Serine 226 (acyl-ester intermediate) is an active-site residue. Residues cysteine 281 and cysteine 292 are joined by a disulfide bond. Catalysis depends on glutamate 346, which acts as the Charge relay system. N-linked (GlcNAc...) asparagine glycans are attached at residues asparagine 363 and asparagine 443. The active-site Charge relay system is the histidine 454.

Belongs to the type-B carboxylesterase/lipase family. Post-translationally, N-glycosylated; contains a fucosylated complex carbohydrate. Present at high level in urine. Expressed in the kidney proximal straight tubular cells and is secreted from the apical compartment of the cells into the urine (at protein level). In mature cats, it is present at higher level in intact males than in castrated males or in intact or spayed females.

It is found in the secreted. It catalyses the reaction a carboxylic ester + H2O = an alcohol + a carboxylate + H(+). In terms of biological role, carboxylesterase present at high level in urine that regulates production of felinine, a probable pheromone precursor. Probably acts by hydrolyzing the peptide bond of the felinine precursor 3-methylbutanol cyteinylglycine, producing felinine and glycine in cat urine. This chain is Carboxylesterase 5A (CES5A), found in Felis catus (Cat).